The sequence spans 328 residues: Putative thiosulfate sulfurtransferase mpst-1 (328 aa).

Rhodanese domains follow at residues 22 to 162 (NKEG…EVST) and 202 to 320 (KTSE…KKIS). Cys278 (cysteine persulfide intermediate) is an active-site residue.

The enzyme catalyses thiosulfate + hydrogen cyanide = thiocyanate + sulfite + 2 H(+). This Caenorhabditis elegans protein is Putative thiosulfate sulfurtransferase mpst-1 (mpst-1).